The following is a 575-amino-acid chain: Hemagglutinin-neuraminidase (575 aa).

The Intravirion segment spans residues 1–34 (MAEKGKTNSSYWSTTRNDNSTVNTYIDTPAGKTH). A helical transmembrane segment spans residues 35-55 (IWLLIATTMHTILSFIIMILC). At 56-575 (IDLIIKQDTC…SIPKICKITS (520 aa)) the chain is on the virion surface side. N-linked (GlcNAc...) asparagine; by host glycosylation occurs at Asn-77. 4 disulfides stabilise this stretch: Cys-192–Cys-216, Cys-258–Cys-271, Cys-357–Cys-469, and Cys-463–Cys-473. The segment at 254 to 259 (NRKSCS) is involved in neuraminidase activity. 2 N-linked (GlcNAc...) asparagine; by host glycosylation sites follow: Asn-499 and Asn-511. Cysteines 535 and 544 form a disulfide.

It belongs to the paramyxoviruses hemagglutinin-neuraminidase family. Homotetramer; composed of disulfide-linked homodimers. Interacts with F protein trimer.

Its subcellular location is the virion membrane. The protein localises to the host cell membrane. The catalysed reaction is Hydrolysis of alpha-(2-&gt;3)-, alpha-(2-&gt;6)-, alpha-(2-&gt;8)- glycosidic linkages of terminal sialic acid residues in oligosaccharides, glycoproteins, glycolipids, colominic acid and synthetic substrates.. Functionally, attaches the virus to sialic acid-containing cell receptors and thereby initiating infection. Binding of HN protein to the receptor induces a conformational change that allows the F protein to trigger virion/cell membranes fusion. Its function is as follows. Neuraminidase activity ensures the efficient spread of the virus by dissociating the mature virions from the neuraminic acid containing glycoproteins. The protein is Hemagglutinin-neuraminidase (HN) of Human parainfluenza 1 virus (strain Washington/1957) (HPIV-1).